The primary structure comprises 784 residues: Protein translocase subunit SecA 2 (784 aa).

Residues Gln94, 112 to 116 (GEGKT), and Asp501 each bind ATP.

The protein belongs to the SecA family. In terms of assembly, monomer and homodimer. Part of the essential Sec protein translocation apparatus which comprises SecA, SecYEG and auxiliary proteins SecDF. Other proteins may also be involved.

It localises to the cell membrane. Its subcellular location is the cytoplasm. The catalysed reaction is ATP + H2O + cellular proteinSide 1 = ADP + phosphate + cellular proteinSide 2.. Part of the Sec protein translocase complex. Interacts with the SecYEG preprotein conducting channel. Has a central role in coupling the hydrolysis of ATP to the transfer of proteins into and across the cell membrane, serving as an ATP-driven molecular motor driving the stepwise translocation of polypeptide chains across the membrane. The polypeptide is Protein translocase subunit SecA 2 (Mycolicibacterium smegmatis (strain ATCC 700084 / mc(2)155) (Mycobacterium smegmatis)).